Reading from the N-terminus, the 396-residue chain is Purine ribonucleoside efflux pump NepI (396 aa).

Topologically, residues 1 to 21 (MSEFIAENRGADAITRPNWSA) are cytoplasmic. The chain crosses the membrane as a helical span at residues 22–42 (VFSVAFCVACLIIVEFLPVSL). Residues 43-54 (LTPMAQDLGISE) are Periplasmic-facing. The chain crosses the membrane as a helical span at residues 55–75 (GVAGQSVTVTAFVAMFASLFI). Over 76-85 (TQTIQATDRC) the chain is Cytoplasmic. A helical transmembrane segment spans residues 86–106 (YVVILFAVLLTLSCLLVSFAN). Position 107 (Ser107) is a topological domain, periplasmic. The helical transmembrane segment at 108-128 (FSLLLIGRACLGLALGGFWAM) threads the bilayer. The Cytoplasmic segment spans residues 129 to 147 (SASLTMRLVPPRTVPKALS). Residues 148 to 168 (VIFGAVSIALVIAAPLGSFLG) form a helical membrane-spanning segment. Over 169 to 175 (ELIGWRN) the chain is Periplasmic. The helical transmembrane segment at 176-196 (VFNAAAVMGVLCIFWIIKSLP) threads the bilayer. At 197–215 (SLPGEPSHQKQNTFRLLQR) the chain is on the cytoplasmic side. A helical transmembrane segment spans residues 216–236 (PGVMAGMIAIFMSFAGQFAFF). Residues 237–255 (TYIRPVYMNLAGFGVDGLT) lie on the Periplasmic side of the membrane. A helical transmembrane segment spans residues 256–276 (LVLLSFGIASFIGTSLSSFIL). At 277 to 281 (KRSVK) the chain is on the cytoplasmic side. Residues 282-302 (LALAGAPLILAVSALVLTLWG) form a helical membrane-spanning segment. The Periplasmic segment spans residues 303 to 305 (SDK). The helical transmembrane segment at 306 to 326 (IVATGVAIIWGLTFALVPVGW) threads the bilayer. The Cytoplasmic segment spans residues 327-343 (STWITRSLADQAEKAGS). Residues 344-364 (IQVAVIQLANTCGAAIGGYAL) form a helical membrane-spanning segment. Residues 365–366 (DN) lie on the Periplasmic side of the membrane. Residues 367-387 (IGLTSPLMLSGTLMLLTALLV) traverse the membrane as a helical segment. Topologically, residues 388-396 (TAKVKMKKS) are cytoplasmic.

Belongs to the major facilitator superfamily. DHA1 family. NepI (TC 2.A.1.2.26) subfamily.

Its subcellular location is the cell inner membrane. It catalyses the reaction inosine(in) + H(+)(out) = inosine(out) + H(+)(in). The enzyme catalyses guanosine(in) + H(+)(out) = guanosine(out) + H(+)(in). Functionally, involved in the efflux of purine ribonucleosides, such as inosine and guanosine. In Shigella boydii serotype 4 (strain Sb227), this protein is Purine ribonucleoside efflux pump NepI.